The sequence spans 180 residues: Large ribosomal subunit protein uL6 (180 aa).

The protein belongs to the universal ribosomal protein uL6 family. In terms of assembly, part of the 50S ribosomal subunit.

In terms of biological role, this protein binds to the 23S rRNA, and is important in its secondary structure. It is located near the subunit interface in the base of the L7/L12 stalk, and near the tRNA binding site of the peptidyltransferase center. The sequence is that of Large ribosomal subunit protein uL6 from Borrelia turicatae (strain 91E135).